The following is a 257-amino-acid chain: Adenosylcobinamide-GDP ribazoletransferase (257 aa).

The next 6 helical transmembrane spans lie at 4 to 24 (AVRG…WWLG), 40 to 60 (VVGL…QWFF), 64 to 84 (FVVQ…LLHL), 116 to 136 (AAVA…AALL), 140 to 160 (AALA…ALLI), and 193 to 213 (LFVT…VVAV).

It belongs to the CobS family. It depends on Mg(2+) as a cofactor.

It localises to the cell inner membrane. The enzyme catalyses alpha-ribazole + adenosylcob(III)inamide-GDP = adenosylcob(III)alamin + GMP + H(+). The catalysed reaction is alpha-ribazole 5'-phosphate + adenosylcob(III)inamide-GDP = adenosylcob(III)alamin 5'-phosphate + GMP + H(+). It participates in cofactor biosynthesis; adenosylcobalamin biosynthesis; adenosylcobalamin from cob(II)yrinate a,c-diamide: step 7/7. Joins adenosylcobinamide-GDP and alpha-ribazole to generate adenosylcobalamin (Ado-cobalamin). Also synthesizes adenosylcobalamin 5'-phosphate from adenosylcobinamide-GDP and alpha-ribazole 5'-phosphate. The polypeptide is Adenosylcobinamide-GDP ribazoletransferase (Alkalilimnicola ehrlichii (strain ATCC BAA-1101 / DSM 17681 / MLHE-1)).